The chain runs to 463 residues: Annexin A7 (463 aa).

Composition is skewed to pro residues over residues 1 to 18 (MSYPGYPPTGYPPFPGYP) and 26 to 38 (FPPPGQYPYPSGF). 2 disordered regions span residues 1–54 (MSYP…SSGY) and 71–153 (GYPG…THGT). The repeat-rich region stretch occupies residues 1 to 140 (MSYPGYPPTG…QYPGGQSPYP (140 aa)). The interval 5-20 (GYPPTGYPPFPGYPPT) is 3 X 5 AA tandem repeats of G-Y-P-P-X. A compositionally biased stretch (gly residues) spans 86–99 (GGQGFGAPPGGAGF). Annexin repeat units follow at residues 160-231 (FDAM…ALFM), 232-303 (PSTY…SMCQ), 315-387 (QLAQ…TILQ), and 391-462 (NRPA…AIVG). Residue Lys208 is modified to N6-acetyllysine.

The protein belongs to the annexin family. In terms of assembly, interacts with PDCD6.

In terms of biological role, calcium/phospholipid-binding protein which promotes membrane fusion and is involved in exocytosis. The polypeptide is Annexin A7 (ANXA7) (Bos taurus (Bovine)).